The sequence spans 1148 residues: Trafficking protein particle complex subunit 9 (1148 aa).

A phosphoserine mark is found at Ser566 and Ser953.

Belongs to the NIBP family. Component of the multisubunit TRAPP (transport protein particle) complex, which includes at least TRAPPC2, TRAPPC2L, TRAPPC3, TRAPPC3L, TRAPPC4, TRAPPC5, TRAPPC8, TRAPPC9, TRAPPC10, TRAPPC11 and TRAPPC12. Directly interacts with IKBKB and MAP3K14. In terms of tissue distribution, expressed at high levels in muscle and kidney and to a lower extent in brain, heart and placenta.

It localises to the golgi apparatus. The protein resides in the cis-Golgi network. It is found in the endoplasmic reticulum. Its subcellular location is the cytoplasm. Functions as an activator of NF-kappa-B through increased phosphorylation of the IKK complex. May function in neuronal cells differentiation. May play a role in vesicular transport from endoplasmic reticulum to Golgi. The protein is Trafficking protein particle complex subunit 9 (TRAPPC9) of Homo sapiens (Human).